Consider the following 78-residue polypeptide: Defensin-like protein 173 (78 aa).

The N-terminal stretch at 1–23 is a signal peptide; that stretch reads MAKAPSPLVFPIIFLIIFALVEP. 4 disulfide bridges follow: cysteine 27/cysteine 71, cysteine 34/cysteine 56, cysteine 40/cysteine 65, and cysteine 44/cysteine 67.

It belongs to the DEFL family.

The protein localises to the secreted. This is Defensin-like protein 173 (LCR63) from Arabidopsis thaliana (Mouse-ear cress).